The chain runs to 229 residues: Uracil-DNA glycosylase (229 aa).

The Proton acceptor role is filled by Asp65.

It belongs to the uracil-DNA glycosylase (UDG) superfamily. UNG family.

The protein resides in the cytoplasm. The enzyme catalyses Hydrolyzes single-stranded DNA or mismatched double-stranded DNA and polynucleotides, releasing free uracil.. Its function is as follows. Excises uracil residues from the DNA which can arise as a result of misincorporation of dUMP residues by DNA polymerase or due to deamination of cytosine. The polypeptide is Uracil-DNA glycosylase (Limosilactobacillus fermentum (strain NBRC 3956 / LMG 18251) (Lactobacillus fermentum)).